Consider the following 1218-residue polypeptide: Sodium bicarbonate cotransporter 3 (1218 aa).

Disordered stretches follow at residues 1–31 (MEAD…KTSS) and 53–99 (HVPF…SQRV). Over 1–612 (MEADGAGEQM…DFKDALSLQC (612 aa)) the chain is Extracellular. S57, S60, S89, and S155 each carry phosphoserine. Positions 60-77 (SRRRHRHRGHKHHHRRRK) are enriched in basic residues. Residues 78–90 (DKDSDKEDGRESP) show a composition bias toward basic and acidic residues. An N-linked (GlcNAc...) asparagine glycan is attached at N176. S238, S247, and R263 each carry phosphoserine. N-linked (GlcNAc...) asparagine glycosylation is present at N274. 3 disordered regions span residues 294–350 (SRAG…DIPR), 364–412 (KGQE…ENST), and 536–577 (SIRI…HAGP). Over residues 308 to 318 (VPTPQNSPPSS) the composition is skewed to pro residues. The span at 319 to 337 (PSLSRLTSRSSQQTQPQAP) shows a compositional bias: low complexity. Residues 383–396 (SPQSAPGNLDSSKS) show a composition bias toward polar residues. Residues S386, S404, and S407 each carry the phosphoserine modification. The N-linked (GlcNAc...) asparagine glycan is linked to N410. Residues S411 and S560 each carry the phosphoserine modification. The span at 567–576 (PPKEADHHAG) shows a compositional bias: basic and acidic residues. The helical transmembrane segment at 613–633 (LASILFLYCACMSPVITFGGL) threads the bilayer. Residues 634–641 (LGEATEGR) are Cytoplasmic-facing. The chain crosses the membrane as a helical span at residues 642–662 (ISAIESLFGASLTGIAYSLFA). At 663–699 (GQPLTILGSTGPVLVFEKILFKFCRDYHLSYLSLRTS) the chain is on the extracellular side. The chain crosses the membrane as a helical span at residues 700-720 (IGLWTSFLCIVLVATDASSLV). At 721 to 729 (CYITRFTEE) the chain is on the cytoplasmic side. The helical transmembrane segment at 730–750 (AFAALICIIFIYEALEKLFHL) threads the bilayer. The Extracellular portion of the chain corresponds to 751 to 821 (GEIYAFNMHN…MFVGSACGPH (71 aa)). The cysteines at positions 770 and 772 are disulfide-linked. Residues N780, N790, and N800 are each glycosylated (N-linked (GlcNAc...) asparagine). A disulfide bridge links C806 with C818. The helical transmembrane segment at 822 to 842 (GPYVPDVLFWCVVLFFTTFFL) threads the bilayer. Residues 843–865 (SSFLKQFKTKRYFPTKVRSTISD) lie on the Cytoplasmic side of the membrane. A helical transmembrane segment spans residues 866-886 (FAVFLTIVIMVAIDYLVGIPS). Residues 887 to 912 (PKLHVPEKFEPTDPSRGWIISPLGDN) are Extracellular-facing. Residues 913–933 (PWWTLLIAAVPALLCTILIFM) traverse the membrane as a helical segment. Over 934–958 (DQQITAVIINRKEHKLKKGAGYHLD) the chain is Cytoplasmic. The helical transmembrane segment at 959-979 (LLMVAVMLGVCSIMGLPWFVA) threads the bilayer. The Extracellular portion of the chain corresponds to 980-1015 (ATVLSISHVNSLKVESECSAPGEQPKFLGIREQRVT). The segment at 1012-1135 (QRVTGLMIFI…MDLCFTKREL (124 aa)) is essential for cell membrane localization and transport activity. Residues 1016-1036 (GLMIFILMGLSVFMTSVLKFI) form a helical membrane-spanning segment. Over 1037 to 1038 (PM) the chain is Cytoplasmic. A helical transmembrane segment spans residues 1039-1059 (PVLYGVFLYMGVSSLKGIQFF). Over 1060-1096 (DRIKLFGMPAKHQPDLIYLRYVPLWKVHVFTVVQLTC) the chain is Extracellular. Phosphoserine is present on residues M1067 and L1078. A helical membrane pass occupies residues 1097-1117 (LVLLWVIKASAAAVVFPMMVL). Residues 1118-1140 (ALVFVRKLMDLCFTKRELSWLDD) form an essential for interaction with RACK1 region. At 1118–1218 (ALVFVRKLMD…KKYMDAETSL (101 aa)) the chain is on the cytoplasmic side. The segment at 1138–1140 (LDD) is CA2-binding. The span at 1148-1165 (KKEDDKKKKEKEEAERML) shows a compositional bias: basic and acidic residues. Residues 1148–1172 (KKEDDKKKKEKEEAERMLQGDGDTV) are disordered. Residue T1171 is modified to Phosphothreonine. Residues S1180, T1188, I1201, and S1217 each carry the phosphoserine modification. A PDZ-binding motif is present at residues 1215 to 1218 (ETSL).

Belongs to the anion exchanger (TC 2.A.31) family. As to quaternary structure, interacts with USH1C. Forms a complex with ATP6V1B1 and NHERF1/EBP50. Interacts in a pH dependent-manner with CA2/carbonic anhydrase 2. Interacts with CFTR probably through NHERF1/EBP50. In terms of assembly, interacts with RACK1. Undergoes lysosome-mediated degradation. In terms of processing, N-glycosylated. As to expression, expressed in aorta, ventricles, atrium, mesenteric artery, kidney, spleen, duodenum, jejunum, ileum, colon, lung, trachea, gastric fundus and pylorus, cerebrum, cerebellum, pancreas, liver, parotid gland, and epididymis. Expressed in the inner ear by cochlear outer and inner hair cells (at protein level). Highly expressed in testis and spleen. In terms of tissue distribution, specifically expressed in kidney. Specifically expressed in hippocampal neurons.

The protein localises to the basolateral cell membrane. It is found in the apical cell membrane. The protein resides in the cell projection. It localises to the stereocilium. Its subcellular location is the cell membrane. It carries out the reaction hydrogencarbonate(in) + Na(+)(in) = hydrogencarbonate(out) + Na(+)(out). With respect to regulation, insensitive to stilbene derivatives. In terms of biological role, electroneutral sodium- and bicarbonate-dependent cotransporter with a Na(+):HCO3(-) 1:1 stoichiometry. Mediates the sodium-dependent bicarbonate transport important for pH recovery after acid load as well as for regulation of steady-state pH in the duodenum and vascular smooth muscle cells. Plays a key role in macrophage acidification, mediating bicarbonate import into the cytoplasm which is crucial for net acid extrusion and maintenance of cytoplasmic pH during phagocytosis. Provides cellular bicarbonate for de novo purine and pyrimidine synthesis and is a key mediator of de novo nucleotide synthesis downstream of mTORC1 signaling in proliferating cells. In Rattus norvegicus (Rat), this protein is Sodium bicarbonate cotransporter 3 (Slc4a7).